A 338-amino-acid polypeptide reads, in one-letter code: Ribosomal RNA small subunit methyltransferase H (338 aa).

Residues 53-55 (GGH), aspartate 72, tyrosine 99, aspartate 123, and glutamine 130 contribute to the S-adenosyl-L-methionine site. Disordered regions lie at residues 276 to 297 (EITPRSKSKSPEGLPVELPGMG) and 304 to 323 (TRGAERASEQEVEENPRSAP).

It belongs to the methyltransferase superfamily. RsmH family.

The protein resides in the cytoplasm. It carries out the reaction cytidine(1402) in 16S rRNA + S-adenosyl-L-methionine = N(4)-methylcytidine(1402) in 16S rRNA + S-adenosyl-L-homocysteine + H(+). In terms of biological role, specifically methylates the N4 position of cytidine in position 1402 (C1402) of 16S rRNA. This chain is Ribosomal RNA small subunit methyltransferase H, found in Rhodococcus jostii (strain RHA1).